The following is a 768-amino-acid chain: Ral guanine nucleotide dissociation stimulator-like 1 (768 aa).

Residues 65–196 form the N-terminal Ras-GEF domain; that stretch reads KIRTIKAGTL…RAQNLLEQFQ (132 aa). The region spanning 232-501 is the Ras-GEF domain; that stretch reads SEDLVAEQLT…YALSCEIEAA (270 aa). Position 520 is a phosphoserine (S520). The disordered stretch occupies residues 530–623; sequence PGSTPTKEQP…PPTCNNNPKI (94 aa). 2 stretches are compositionally biased toward low complexity: residues 541-561 and 586-596; these read SAAS…SCES and ESSSSCSSIHS. Residues 597–621 show a composition bias toward polar residues; that stretch reads MDTNSSGMSSLINPLSSPPTCNNNP. The region spanning 648 to 735 is the Ras-associating domain; the sequence is DTCIIRISVE…FDFILRKKNS (88 aa).

Interacts with Ras.

Probable guanine nucleotide exchange factor. The chain is Ral guanine nucleotide dissociation stimulator-like 1 (Rgl1) from Mus musculus (Mouse).